Reading from the N-terminus, the 462-residue chain is MTKQKTWSDRFEGSLHPAIVEFNASIGFDIELIEYDLTGSIAHAQMLAHTGIISPEEAQKLTQGLEQIRQEYRQGEFKPGIDQEDVHFAVERRLTEIVGDVGKKLHTARSRNDQVGTDIRLYLRDQISQIRAQLREFQQVLVNHAENHIETLIPGYTHLQRAQPISLAHHLLAYFQMAQRDWERLGEIYARTNISPLGCGALAGTTFPIDRHYSAELLQFQGVYGNSLDGVSDRDFAIEFLNAASLIMVHLSRLSEEMILWSSHEFSFISLTDSCATGSSIMPQKKNPDVPELVRGKAGRVFGHLQGMLVLMKGLPLAYNKDLQEDKEAIFDGVKTVKVCLEAMTILLAEGIKFREERLAEAVSEDFSNATDVADYLAAKGIPFREAYNLVGKVVKTSSAAGKLLKDLSLEEWQALHPAFEADIYDAIAPKQVVAARNSYGGTGFEQIRQAITRAKAQLESS.

This sequence belongs to the lyase 1 family. Argininosuccinate lyase subfamily.

The protein localises to the cytoplasm. The enzyme catalyses 2-(N(omega)-L-arginino)succinate = fumarate + L-arginine. It participates in amino-acid biosynthesis; L-arginine biosynthesis; L-arginine from L-ornithine and carbamoyl phosphate: step 3/3. This chain is Argininosuccinate lyase, found in Rippkaea orientalis (strain PCC 8801 / RF-1) (Cyanothece sp. (strain PCC 8801)).